The sequence spans 632 residues: Golgin subfamily A member 8J (632 aa).

Positions 1 to 76 are disordered; that stretch reads MAEETQHNKL…TSSATLKDLE (76 aa). 2 coiled-coil regions span residues 86–154 and 220–421; these read LDSR…HMKR and LKVQ…SLMA. Composition is skewed to basic and acidic residues over residues 352-362 and 427-440; these read KQEERIQEQHK and HGGEHLDSEGEEAP. Disordered stretches follow at residues 352–377, 423–452, and 496–524; these read KQEERIQEQHKSLQQLAKPQSVFKEP, PGEGHGGEHLDSEGEEAPRPMPSVPEDPES, and LSEPGGRAKDAALGGGHHQAGAQGGDEGE. Gly residues predominate over residues 508 to 520; that stretch reads LGGGHHQAGAQGG.

It belongs to the GOLGA8 family.

This is Golgin subfamily A member 8J (GOLGA8J) from Homo sapiens (Human).